The following is an 873-amino-acid chain: Leucine--tRNA ligase (873 aa).

A 'HIGH' region motif is present at residues 42–52; it reads PYPSGKLHMGH. Residues 624 to 643 form a disordered region; that stretch reads PVEIGGTEKMSKSKNNGVDP. A 'KMSKS' region motif is present at residues 632-636; sequence KMSKS. Residue K635 participates in ATP binding.

This sequence belongs to the class-I aminoacyl-tRNA synthetase family.

The protein localises to the cytoplasm. The enzyme catalyses tRNA(Leu) + L-leucine + ATP = L-leucyl-tRNA(Leu) + AMP + diphosphate. This chain is Leucine--tRNA ligase, found in Pseudomonas paraeruginosa (strain DSM 24068 / PA7) (Pseudomonas aeruginosa (strain PA7)).